A 245-amino-acid polypeptide reads, in one-letter code: 6-carboxyhexanoate--CoA ligase (245 aa).

This sequence belongs to the BioW family. As to quaternary structure, homodimer. The cofactor is Mg(2+).

It catalyses the reaction heptanedioate + ATP + CoA = 6-carboxyhexanoyl-CoA + AMP + diphosphate. Its pathway is metabolic intermediate metabolism; pimeloyl-CoA biosynthesis; pimeloyl-CoA from pimelate: step 1/1. Functionally, catalyzes the transformation of pimelate into pimeloyl-CoA with concomitant hydrolysis of ATP to AMP. The chain is 6-carboxyhexanoate--CoA ligase from Sulfurihydrogenibium sp. (strain YO3AOP1).